The chain runs to 114 residues: Large ribosomal subunit protein uL22c (114 aa).

The protein belongs to the universal ribosomal protein uL22 family. As to quaternary structure, part of the 50S ribosomal subunit.

Its subcellular location is the plastid. It localises to the cyanelle. This protein binds specifically to 23S rRNA. Functionally, the globular domain of the protein is located near the polypeptide exit tunnel on the outside of the subunit, while an extended beta-hairpin is found that lines the wall of the exit tunnel in the center of the 70S ribosome. This chain is Large ribosomal subunit protein uL22c (rpl22), found in Cyanophora paradoxa.